The primary structure comprises 497 residues: Ectonucleoside triphosphate diphosphohydrolase 8 (497 aa).

The Cytoplasmic portion of the chain corresponds to 1 to 8; it reads MGLSWKER. Residues 9-29 traverse the membrane as a helical segment; that stretch reads VFMALLGVAAASGLTMLVLIL. The Extracellular segment spans residues 30–473; sequence VKAINVLLPA…AQSYSIWTAG (444 aa). The cysteines at positions 78 and 102 are disulfide-linked. The Proton acceptor role is filled by Glu-168. A disulfide bridge links Cys-245 with Cys-294. Asn-306 carries an N-linked (GlcNAc...) asparagine glycan. A disulfide bond links Cys-331 and Cys-337. An N-linked (GlcNAc...) asparagine glycan is attached at Asn-365. Cys-383 and Cys-405 are oxidised to a cystine. The chain crosses the membrane as a helical span at residues 474-494; sequence VVFAVLTLVAILGAAAIQIFW. The Cytoplasmic portion of the chain corresponds to 495–497; the sequence is TQD.

The protein belongs to the GDA1/CD39 NTPase family. Requires Ca(2+) as cofactor. The cofactor is Mg(2+). In terms of processing, N-glycosylated. In terms of tissue distribution, expressed in liver, jejunum and kidney.

The protein localises to the cell membrane. It carries out the reaction a ribonucleoside 5'-triphosphate + 2 H2O = a ribonucleoside 5'-phosphate + 2 phosphate + 2 H(+). Its function is as follows. Canalicular ectonucleoside NTPDase responsible for the main hepatic NTPDase activity. Ectonucleoside NTPDases catalyze the hydrolysis of gamma- and beta-phosphate residues of nucleotides, playing a central role in concentration of extracellular nucleotides. Has activity toward ATP, ADP, UTP and UDP, but not toward AMP. In Mus musculus (Mouse), this protein is Ectonucleoside triphosphate diphosphohydrolase 8 (Entpd8).